Reading from the N-terminus, the 400-residue chain is Pyruvate dehydrogenase E1 component subunit beta-4, chloroplastic (400 aa).

Positions 1–34 are disordered; the sequence is MAAASSLHAAPRVGSSSSFSSSSSAGRRSASAAR. A chloroplast-targeting transit peptide spans 1 to 57; the sequence is MAAASSLHAAPRVGSSSSFSSSSSAGRRSASAARSVRVAAAAGSCAARRAGGRMVAR. Residues 9–34 show a composition bias toward low complexity; that stretch reads AAPRVGSSSSFSSSSSAGRRSASAAR. E136 contacts thiamine diphosphate. I189, A237, I238, and N242 together coordinate K(+).

As to quaternary structure, tetramer of 2 alpha and 2 beta subunits. Thiamine diphosphate serves as cofactor.

It is found in the plastid. The protein resides in the chloroplast. The enzyme catalyses N(6)-[(R)-lipoyl]-L-lysyl-[protein] + pyruvate + H(+) = N(6)-[(R)-S(8)-acetyldihydrolipoyl]-L-lysyl-[protein] + CO2. In terms of biological role, the pyruvate dehydrogenase complex catalyzes the overall conversion of pyruvate to acetyl-CoA and CO(2). It contains multiple copies of three enzymatic components: pyruvate dehydrogenase (E1), dihydrolipoamide acetyltransferase (E2) and lipoamide dehydrogenase (E3). The chain is Pyruvate dehydrogenase E1 component subunit beta-4, chloroplastic from Oryza sativa subsp. japonica (Rice).